The primary structure comprises 429 residues: Adenylosuccinate synthetase (429 aa).

GTP is bound by residues 12-18 and 40-42; these read GDEGKGK and GHT. Asp-13 functions as the Proton acceptor in the catalytic mechanism. Mg(2+) is bound by residues Asp-13 and Gly-40. Residues 13 to 16, 38 to 41, Thr-128, Arg-142, Gln-223, Thr-238, and Arg-302 contribute to the IMP site; these read DEGK and NAGH. Residue His-41 is the Proton donor of the active site. Residue 298-304 coordinates substrate; the sequence is TVTKRPR. GTP is bound by residues Arg-304, 330 to 332, and 412 to 414; these read CLD and SVG.

This sequence belongs to the adenylosuccinate synthetase family. Homodimer. Requires Mg(2+) as cofactor.

The protein resides in the cytoplasm. It catalyses the reaction IMP + L-aspartate + GTP = N(6)-(1,2-dicarboxyethyl)-AMP + GDP + phosphate + 2 H(+). Its pathway is purine metabolism; AMP biosynthesis via de novo pathway; AMP from IMP: step 1/2. Its function is as follows. Plays an important role in the de novo pathway of purine nucleotide biosynthesis. Catalyzes the first committed step in the biosynthesis of AMP from IMP. The protein is Adenylosuccinate synthetase of Lactiplantibacillus plantarum (strain ATCC BAA-793 / NCIMB 8826 / WCFS1) (Lactobacillus plantarum).